Reading from the N-terminus, the 455-residue chain is tRNA-2-methylthio-N(6)-dimethylallyladenosine synthase (455 aa).

The MTTase N-terminal domain occupies 3–117; it reads KGLYIESYGC…LPELIMKATR (115 aa). [4Fe-4S] cluster-binding residues include Cys-12, Cys-48, Cys-80, Cys-155, Cys-159, and Cys-162. Positions 141–375 constitute a Radical SAM core domain; that stretch reads VSRGVSAFVS…LLTQQRLFTK (235 aa).

It belongs to the methylthiotransferase family. MiaB subfamily. Monomer. The cofactor is [4Fe-4S] cluster.

The protein localises to the cytoplasm. It catalyses the reaction N(6)-dimethylallyladenosine(37) in tRNA + (sulfur carrier)-SH + AH2 + 2 S-adenosyl-L-methionine = 2-methylsulfanyl-N(6)-dimethylallyladenosine(37) in tRNA + (sulfur carrier)-H + 5'-deoxyadenosine + L-methionine + A + S-adenosyl-L-homocysteine + 2 H(+). Functionally, catalyzes the methylthiolation of N6-(dimethylallyl)adenosine (i(6)A), leading to the formation of 2-methylthio-N6-(dimethylallyl)adenosine (ms(2)i(6)A) at position 37 in tRNAs that read codons beginning with uridine. The polypeptide is tRNA-2-methylthio-N(6)-dimethylallyladenosine synthase (Anaplasma marginale (strain St. Maries)).